The sequence spans 241 residues: MSQADLPEPAPAFQLKGSMLAITVLELAHNDIERLDEQLAAKVEQAPDFFNNTPLVLALDKLPEASREIDIQALVALCRKHRLRTLALRASDAAHLEAAAALDLPVLPPSGARERKVDPSSKTPAKPAEPTYRPTRVVSTPIRGGQQVYAQGGDLVVLAPVSPGAELLADGNIHVYGPLRGRALAGIKGDTTARIFCRQLAAEMVSIAGQYKVAEDLRRDPLWAEAVQVSLSGDVLNITRL.

Residues 109 to 135 (PSGARERKVDPSSKTPAKPAEPTYRPT) are disordered.

It belongs to the MinC family. In terms of assembly, interacts with MinD and FtsZ.

Cell division inhibitor that blocks the formation of polar Z ring septums. Rapidly oscillates between the poles of the cell to destabilize FtsZ filaments that have formed before they mature into polar Z rings. Prevents FtsZ polymerization. In Stutzerimonas stutzeri (strain A1501) (Pseudomonas stutzeri), this protein is Probable septum site-determining protein MinC.